The sequence spans 89 residues: Small ribosomal subunit protein uS15 (89 aa).

This sequence belongs to the universal ribosomal protein uS15 family. As to quaternary structure, part of the 30S ribosomal subunit. Forms a bridge to the 50S subunit in the 70S ribosome, contacting the 23S rRNA.

One of the primary rRNA binding proteins, it binds directly to 16S rRNA where it helps nucleate assembly of the platform of the 30S subunit by binding and bridging several RNA helices of the 16S rRNA. Functionally, forms an intersubunit bridge (bridge B4) with the 23S rRNA of the 50S subunit in the ribosome. The chain is Small ribosomal subunit protein uS15 from Corynebacterium aurimucosum (strain ATCC 700975 / DSM 44827 / CIP 107346 / CN-1) (Corynebacterium nigricans).